Reading from the N-terminus, the 423-residue chain is UPF0229 protein PSEEN0423 (423 aa).

Positions 85–107 are disordered; it reads GEHIARPQGGGGGGGRGKAGNSG. A compositionally biased stretch (gly residues) spans 92-107; it reads QGGGGGGGRGKAGNSG.

It belongs to the UPF0229 family.

In Pseudomonas entomophila (strain L48), this protein is UPF0229 protein PSEEN0423.